We begin with the raw amino-acid sequence, 428 residues long: UPF0229 protein YeaH (428 aa).

Basic and acidic residues predominate over residues 78 to 90; the sequence is GNDHFIQNDRIER. The disordered stretch occupies residues 78-111; that stretch reads GNDHFIQNDRIERPQGGGGGGSGSGQGQASQDGE. Residues 92–103 are compositionally biased toward gly residues; it reads QGGGGGGSGSGQ.

This sequence belongs to the UPF0229 family.

This chain is UPF0229 protein YeaH, found in Salmonella heidelberg (strain SL476).